The following is a 242-amino-acid chain: GATA zinc finger domain-containing protein 1 (242 aa).

The GATA-type zinc-finger motif lies at C9–C33. Residues G44 to K85 are disordered. The segment covering A45–N54 has biased composition (low complexity).

The protein localises to the nucleus. Its function is as follows. Component of some chromatin complex recruited to chromatin sites methylated 'Lys-4' of histone H3 (H3K4me), with a preference for trimethylated form (H3K4me3). In Danio rerio (Zebrafish), this protein is GATA zinc finger domain-containing protein 1 (gatad1).